A 374-amino-acid chain; its full sequence is Putative zinc finger MYND domain-containing protein R331 (374 aa).

Positions 328, 331, 341, 344, 350, 354, 362, and 366 each coordinate Zn(2+). The MYND-type zinc-finger motif lies at 328–366; sequence CFYCNKNIEKPVVCNKCFRIKYCSEKCQSEYNSYHSDDC.

In Acanthamoeba polyphaga (Amoeba), this protein is Putative zinc finger MYND domain-containing protein R331.